The following is a 157-amino-acid chain: UPF0756 membrane protein BH3161 (157 aa).

The next 4 helical transmembrane spans lie at 1–21 (MISQ…LAKN), 54–74 (LGVT…EIGF), 87–107 (WVAL…IDLL), and 117–137 (LVLG…GPLI).

The protein belongs to the UPF0756 family.

It localises to the cell membrane. The chain is UPF0756 membrane protein BH3161 from Halalkalibacterium halodurans (strain ATCC BAA-125 / DSM 18197 / FERM 7344 / JCM 9153 / C-125) (Bacillus halodurans).